Reading from the N-terminus, the 324-residue chain is Antihemorrhagic factor cHLP-A (324 aa).

The N-terminal stretch at 1–19 (MNSLVALVLLGQIIGSTLS) is a signal peptide. Cystatin fetuin-A-type domains lie at 21-130 (QLGP…VKCK) and 141-254 (RNCP…SDCV). 6 cysteine pairs are disulfide-bonded: C28–C315, C85–C96, C110–C129, C143–C146, C205–C217, and C230–C253. N204 carries N-linked (GlcNAc...) asparagine glycosylation. N282 carries an N-linked (GlcNAc...) asparagine glycan.

Belongs to the fetuin family. In terms of assembly, homodimer. As to expression, expressed by the liver.

Its subcellular location is the secreted. Potent inhibitor of hemorrhagic activity but also proteolytic activities. Inhibition occurs by formation of a non-covalent complex between this protein and the proteinases at their metalloproteinase domains. This chain is Antihemorrhagic factor cHLP-A, found in Gloydius brevicauda (Korean slamosa snake).